A 151-amino-acid polypeptide reads, in one-letter code: Transcriptional regulator MraZ (151 aa).

SpoVT-AbrB domains lie at 5–52 and 81–124; these read ANAV…PLDE and AVDL…DEDA.

It belongs to the MraZ family. Forms oligomers.

The protein localises to the cytoplasm. It localises to the nucleoid. The chain is Transcriptional regulator MraZ from Pseudomonas putida (strain W619).